The following is a 284-amino-acid chain: Pantothenate synthetase (284 aa).

32–39 (MGALHEGH) provides a ligand contact to ATP. His-39 serves as the catalytic Proton donor. Gln-63 provides a ligand contact to (R)-pantoate. Gln-63 serves as a coordination point for beta-alanine. 149–152 (GEKD) lines the ATP pocket. Gln-155 contacts (R)-pantoate. Residues Val-178 and 186–189 (LSSR) each bind ATP.

Belongs to the pantothenate synthetase family. Homodimer.

The protein localises to the cytoplasm. The catalysed reaction is (R)-pantoate + beta-alanine + ATP = (R)-pantothenate + AMP + diphosphate + H(+). The protein operates within cofactor biosynthesis; (R)-pantothenate biosynthesis; (R)-pantothenate from (R)-pantoate and beta-alanine: step 1/1. Functionally, catalyzes the condensation of pantoate with beta-alanine in an ATP-dependent reaction via a pantoyl-adenylate intermediate. In Chelativorans sp. (strain BNC1), this protein is Pantothenate synthetase.